We begin with the raw amino-acid sequence, 1513 residues long: Protein tincar (1513 aa).

Residues 1-77 are Cytoplasmic-facing; sequence MGGKHQGSGA…DSGSYLHLNS (77 aa). A helical membrane pass occupies residues 78 to 98; the sequence is LWSIWYGVMLTLFQGYLAMHG. Topologically, residues 99–120 are extracellular; the sequence is AYRFLGCSLIPWKIEPVAELNL. Residues 121 to 141 traverse the membrane as a helical segment; the sequence is QIVLSGVVFILLPVFFTSAVF. Over 142-181 the chain is Cytoplasmic; sequence KVGNLANDGIKLATGARERRCTLSPHDGLEEESRGGTLRA. A helical transmembrane segment spans residues 182 to 202; the sequence is LWTHGGPTAAFVHIVIALCLL. At 203–668 the chain is on the extracellular side; that stretch reads LPRLLLEARI…VAIFSQPPSA (466 aa). Disordered regions lie at residues 247–266, 354–373, and 383–532; these read TPFPRHHQPSNQQQSHHQHG, ERQELEEAIRGEEDDGDEGV, and MPDF…SIHR. The span at 427–466 shows a compositional bias: low complexity; the sequence is ASSSSSSTTSTTTTTTTSTTTTAATTTSTRGTSTTTTTTT. A compositionally biased stretch (basic residues) spans 478–507; sequence SAHHHHGKSRKHHKHHNKQRQQQPPRRHHV. Over residues 523–532 the composition is skewed to basic and acidic residues; that stretch reads TTTRDSSIHR. A helical membrane pass occupies residues 669–689; it reads EFVNLLCALLVWSVRYPAVFW. Over 690 to 696 the chain is Cytoplasmic; the sequence is NTSKAFA. Residues 697 to 717 traverse the membrane as a helical segment; sequence CVFSLQMVVAALDIILGYVGI. Residues 718–736 are Extracellular-facing; that stretch reads SNLYKLQIYAEAMPVHQPG. The chain crosses the membrane as a helical span at residues 737–757; the sequence is LILNAVVTLALYLLSTALVLA. At 758-787 the chain is on the cytoplasmic side; sequence SSMVMYLYGHGRLATRMRDRSIITLKTHQT. The helical transmembrane segment at 788–808 threads the bilayer; the sequence is WIYFAHCASLCFVLALAVVKA. At 809-826 the chain is on the extracellular side; sequence PLLNDLSATYKNNLHCPT. Residues 827 to 847 form a helical membrane-spanning segment; that stretch reads FLAALVGVTHLLLWIVIWLCL. Over 848-1513 the chain is Cytoplasmic; it reads TIKRRWHFKL…CGLYVTAQLH (666 aa). Low complexity-rich tracts occupy residues 879-903 and 1060-1071; these read SSGQRTGSNSSSSGCNSTSTTVNGG and QQQQQQQQQQRQ. 5 disordered regions span residues 879–913, 1045–1090, 1115–1155, 1173–1214, and 1231–1335; these read SSGQRTGSNSSSSGCNSTSTTVNGGDSKPDMMSTA, EYDE…SGLG, ASTS…HSAG, EHHH…PHQH, and AHIA…DPAA. Pro residues predominate over residues 1122-1149; that stretch reads PPQPSAQAPPPPPPLPIKGAPVPQPPAV. Composition is skewed to low complexity over residues 1179 to 1208 and 1255 to 1285; these read LQHSLQHPQHHPLQQQQQKQQTPQHPLQQQ and TPRSDTTSTTESTNTTSPPERAPSESSSGVH. Over residues 1286-1296 the composition is skewed to basic and acidic residues; that stretch reads SGEERELEVII. Positions 1303–1314 are enriched in pro residues; it reads KPPPRPPQPPIQ. The span at 1324–1335 shows a compositional bias: polar residues; sequence MRMSSFNADPAA.

In terms of tissue distribution, expression varies in tissues throughout development. At stage 5, expressed in the embryo dorsal region followed by expression in a striped pattern at stage 6. During gastrulation, expressed in ventral region and ventral nerve cord. Also detected in many neurons in the externa sensilla and chordotonal organ. At stage 16, expressed on the surface of the midgut. Additionally, expressed in a subset of cardioblasts (Tin+ subpopulation) during dorsal vessel formation. In third-instar larval tissues, expressed in the eye and antennal disks. In the antennal disks, expressed in the second antennal segments. In the eye disks, strongest expression found in the ocelli, and in the differentiating ommatidial cells. Also expressed in all cells within and in the vicinity of the morphogenetic furrow.

The protein resides in the membrane. Involved in eye morphogenesis. May be essential for the normal differentiation of ommatidial cells. The sequence is that of Protein tincar (tinc) from Drosophila melanogaster (Fruit fly).